A 139-amino-acid chain; its full sequence is GSK3-beta interaction protein (139 aa).

A disordered region spans residues 1–22 (METDCNPMELSSMSGFEEGSEL). Positions 41 to 45 (VNDVL) are required for PRKAR2A interaction; contributes to a protective effect against H(2)O(2)-induced apoptosis. Positions 115-139 (SPAYREAFGNALLQRLEALKRDGQS) are interaction with GSK3B and acts as a GSK3B inhibitor.

This sequence belongs to the GSKIP family. In terms of assembly, forms a complex composed of PRKAR2A or PRKAR2B, GSK3B and GSKIP through GSKIP interaction; facilitates PKA-induced phosphorylation of GSK3B leading to GSK3B inactivation; recruits DNM1L through GSK3B for PKA-mediated phosphorylation of DNM1L; promotes beta-catenin degradation through GSK3B-induced phosphorylation of beta-catenin; stabilizes beta-catenin and enhances Wnt-induced signaling through PKA-induced phosphorylation of beta-catenin. Interacts with GSK3B; induces GSK3B-mediated phosphorylation of GSKIP and inhibits GSK3B kinase activity. Phosphorylated by GSK3B.

It localises to the cytoplasm. The protein localises to the nucleus. A-kinase anchoring protein for GSK3B and PKA that regulates or facilitates their kinase activity towards their targets. The ternary complex enhances Wnt-induced signaling by facilitating the GSK3B- and PKA-induced phosphorylation of beta-catenin leading to beta-catenin degradation and stabilization respectively. Upon cAMP activation, the ternary complex contributes to neuroprotection against oxidative stress-induced apoptosis by facilitating the PKA-induced phosphorylation of DML1 and PKA-induced inactivation of GSK3B. During neurite outgrowth promotes neuron proliferation; while increases beta-catenin-induced transcriptional activity through GSK3B kinase activity inhibition, reduces N-cadherin level to promote cell cycle progression. May play a role in cleft palate formation and is required for postnatal life through modulation of the activity of GSK3B during development. The protein is GSK3-beta interaction protein of Macaca fascicularis (Crab-eating macaque).